The following is a 29-amino-acid chain: NAD(P)H-quinone oxidoreductase subunit 5, chloroplastic (29 aa).

A helical membrane pass occupies residues 1–15 (SGSIIHSMEANVGYS).

The protein belongs to the complex I subunit 5 family. In terms of assembly, NDH is composed of at least 16 different subunits, 5 of which are encoded in the nucleus.

The protein resides in the plastid. It is found in the chloroplast thylakoid membrane. It carries out the reaction a plastoquinone + NADH + (n+1) H(+)(in) = a plastoquinol + NAD(+) + n H(+)(out). The catalysed reaction is a plastoquinone + NADPH + (n+1) H(+)(in) = a plastoquinol + NADP(+) + n H(+)(out). Functionally, NDH shuttles electrons from NAD(P)H:plastoquinone, via FMN and iron-sulfur (Fe-S) centers, to quinones in the photosynthetic chain and possibly in a chloroplast respiratory chain. The immediate electron acceptor for the enzyme in this species is believed to be plastoquinone. Couples the redox reaction to proton translocation, and thus conserves the redox energy in a proton gradient. The protein is NAD(P)H-quinone oxidoreductase subunit 5, chloroplastic of Pseudotsuga menziesii (Douglas-fir).